Here is a 214-residue protein sequence, read N- to C-terminus: Variable small protein 1 (214 aa).

The signal sequence occupies residues 1-18; that stretch reads MRKRISAIIMTLFMVFMS. The N-palmitoyl cysteine moiety is linked to residue Cys19. Cys19 is lipidated: S-diacylglycerol cysteine.

Belongs to the variable small protein (Vsp) family.

The protein resides in the cell outer membrane. Functionally, the Vlp and Vsp proteins are antigenically distinct proteins, only one vlp or vsp gene is transcriptionally active at any one time. Switching between these genes is a mechanism of host immune response evasion. This is Variable small protein 1 from Borrelia hermsii.